A 252-amino-acid chain; its full sequence is Indole-3-glycerol phosphate synthase (252 aa).

This sequence belongs to the TrpC family.

The enzyme catalyses 1-(2-carboxyphenylamino)-1-deoxy-D-ribulose 5-phosphate + H(+) = (1S,2R)-1-C-(indol-3-yl)glycerol 3-phosphate + CO2 + H2O. Its pathway is amino-acid biosynthesis; L-tryptophan biosynthesis; L-tryptophan from chorismate: step 4/5. In Listeria monocytogenes serotype 4b (strain CLIP80459), this protein is Indole-3-glycerol phosphate synthase.